Reading from the N-terminus, the 322-residue chain is MPGNSRRRGAVRKSGTKKGAGVGSGGQRRRGLEGRGPTPPAHLRPHHPAAKRARAQPRRPVKRADETETVLGRNPVLECLRAGVPATALYVALGTEADERLTECVARAADSGIAIVELLRADLDRMTANHLHQGIALQVPPYNYAHPDDLLAAALDQPPALLVALDNLSDPRNLGAIVRSVAAFGGHGVLIPQRRSASVTAVAWRTSAGAAARIPVARATNLTRTLKGWADRGVRVIGLDAGGGTALDDVDGTDSLVVVVGSEGKGLSRLVRQNCDEVVSIPMAAQAESLNASVAAGVVLAEIARQRRRPREPREQTQNRMI.

Composition is skewed to basic residues over residues 1-16 (MPGNSRRRGAVRKSGT) and 43-61 (LRPHHPAAKRARAQPRRPV). The interval 1–69 (MPGNSRRRGA…PVKRADETET (69 aa)) is disordered. Gly261, Ile281, and Leu290 together coordinate S-adenosyl-L-methionine.

This sequence belongs to the class IV-like SAM-binding methyltransferase superfamily. RNA methyltransferase TrmH family.

This is an uncharacterized protein from Mycobacterium tuberculosis (strain CDC 1551 / Oshkosh).